Reading from the N-terminus, the 530-residue chain is Retinoic acid-induced protein 2 (530 aa).

The span at 1 to 13 (MDDLQSQNLSMDM) shows a compositional bias: polar residues. Positions 1–22 (MDDLQSQNLSMDMTDSPPALAN) are disordered.

The protein is Retinoic acid-induced protein 2 (RAI2) of Homo sapiens (Human).